The chain runs to 679 residues: UvrABC system protein B (679 aa).

A Helicase ATP-binding domain is found at 25–412; that stretch reads EGVNQGQRYQ…DGHLAEQVIR (388 aa). 38–45 serves as a coordination point for ATP; it reads GATGTGKT. Positions 91-114 match the Beta-hairpin motif; it reads YYDYYQPEAYVPVSDTYIAKTSSI. The Helicase C-terminal domain maps to 429–591; the sequence is QVDDLLAEIR…IVPRPAGKRA (163 aa). One can recognise a UVR domain in the interval 639 to 674; sequence PELIDQLETKMKEAAKNLNFEEAASLRDRIKKFRQK.

It belongs to the UvrB family. As to quaternary structure, forms a heterotetramer with UvrA during the search for lesions. Interacts with UvrC in an incision complex.

It is found in the cytoplasm. Its function is as follows. The UvrABC repair system catalyzes the recognition and processing of DNA lesions. A damage recognition complex composed of 2 UvrA and 2 UvrB subunits scans DNA for abnormalities. Upon binding of the UvrA(2)B(2) complex to a putative damaged site, the DNA wraps around one UvrB monomer. DNA wrap is dependent on ATP binding by UvrB and probably causes local melting of the DNA helix, facilitating insertion of UvrB beta-hairpin between the DNA strands. Then UvrB probes one DNA strand for the presence of a lesion. If a lesion is found the UvrA subunits dissociate and the UvrB-DNA preincision complex is formed. This complex is subsequently bound by UvrC and the second UvrB is released. If no lesion is found, the DNA wraps around the other UvrB subunit that will check the other stand for damage. This Prochlorococcus marinus (strain MIT 9313) protein is UvrABC system protein B.